The following is an 828-amino-acid chain: BEN domain-containing protein 3 (828 aa).

A Glycyl lysine isopeptide (Lys-Gly) (interchain with G-Cter in SUMO); alternate cross-link involves residue lysine 20. Residue lysine 20 forms a Glycyl lysine isopeptide (Lys-Gly) (interchain with G-Cter in SUMO1); alternate linkage. Lysine 20 participates in a covalent cross-link: Glycyl lysine isopeptide (Lys-Gly) (interchain with G-Cter in SUMO2); alternate. Glycyl lysine isopeptide (Lys-Gly) (interchain with G-Cter in SUMO2) cross-links involve residues lysine 41, lysine 56, lysine 58, lysine 73, lysine 128, lysine 129, lysine 137, lysine 142, and lysine 158. Residues 56 to 58 (KRK) carry the Nuclear localization signal motif. Serine 164 is subject to Phosphoserine. The segment at 164–184 (SPSSLRLLNEPQKRDCGSTGA) is disordered. Lysine 176 participates in a covalent cross-link: Glycyl lysine isopeptide (Lys-Gly) (interchain with G-Cter in SUMO2). Residues 242 to 343 (PPPEYQLTAA…DFFSRFWAQR (102 aa)) form the BEN 1 domain. A Phosphoserine modification is found at serine 379. The BEN 2 domain occupies 387–487 (ASDHVVDTQD…DELEGLGLDA (101 aa)). A Glycyl lysine isopeptide (Lys-Gly) (interchain with G-Cter in SUMO2) cross-link involves residue lysine 427. The disordered stretch occupies residues 483 to 504 (LGLDAGSEGDPPRDDCYDSSSL). Serine 489 carries the phosphoserine modification. A Glycyl lysine isopeptide (Lys-Gly) (interchain with G-Cter in SUMO); alternate cross-link involves residue lysine 512. A Glycyl lysine isopeptide (Lys-Gly) (interchain with G-Cter in SUMO2); alternate cross-link involves residue lysine 512. Residue lysine 528 forms a Glycyl lysine isopeptide (Lys-Gly) (interchain with G-Cter in SUMO2) linkage. The BEN 3 domain maps to 548-650 (VPGADCLLSK…ERCRRRDTEQ (103 aa)). Residue lysine 700 forms a Glycyl lysine isopeptide (Lys-Gly) (interchain with G-Cter in SUMO2) linkage. The BEN 4 domain occupies 715-816 (VPSPYLLSDK…ERCRRPNRKK (102 aa)).

Homooligomer, probably a homooctamer. Interacts with HDAC2 and HDAC3, but not HDAC1. Interacts with SALL4. Interacts with SMARCA5/SNF2H, BAZ2A/TIP5 and USP21. Interacts with the nucleosome remodeling and histone deacetylase (NuRD) repressor complex. Interacts (via BEN domains 1 and 3) with ERCC6L (via N-terminal TPR repeat); the interaction is direct. Post-translationally, sumoylated at Lys-20 by SUMO1 and at Lys-512 by SUMO1, SUMO2 and SUMO3. Sumoylation probably occurs sequentially, with that of Lys-20 preceding that of Lys-512. It does not alter association with heterochromatin, but is required for the repression of transcription. As to expression, expressed at least in heart, kidney, liver, ovary and spleen, with highest levels in spleen and lowest in heart. Expressed on the surface of T-cells.

It localises to the nucleus. Its subcellular location is the nucleolus. Its function is as follows. Transcriptional repressor which associates with the NoRC (nucleolar remodeling complex) complex and plays a key role in repressing rDNA transcription. The sumoylated form modulates the stability of the NoRC complex component BAZ2A/TIP5 by controlling its USP21-mediated deubiquitination. Binds to unmethylated major satellite DNA and is involved in the recruitment of the Polycomb repressive complex 2 (PRC2) to major satellites. Stimulates the ERCC6L translocase and ATPase activities. This is BEN domain-containing protein 3 (BEND3) from Homo sapiens (Human).